A 102-amino-acid polypeptide reads, in one-letter code: MSRRCELTAKGPLVGHKVSHSNIKTKRRFLPNLVNVTFISEALERNVRLRVSTNAVKSVDHNGGLDAFLLKASADALSPRALELKRAIQKKVGVTAPVKKAS.

The protein belongs to the bacterial ribosomal protein bL28 family.

The protein is Large ribosomal subunit protein bL28 of Bradyrhizobium diazoefficiens (strain JCM 10833 / BCRC 13528 / IAM 13628 / NBRC 14792 / USDA 110).